The sequence spans 520 residues: GMP synthase [glutamine-hydrolyzing] (520 aa).

The Glutamine amidotransferase type-1 domain maps to 12–205 (KIIVLDYGSQ…AISICGARGD (194 aa)). Cys89 serves as the catalytic Nucleophile. Residues His179 and Glu181 contribute to the active site. Positions 206–395 (WSMDNFIDME…LGMPEEIVWR (190 aa)) constitute a GMPS ATP-PPase domain. 233-239 (SGGVDSS) serves as a coordination point for ATP.

As to quaternary structure, homodimer.

It carries out the reaction XMP + L-glutamine + ATP + H2O = GMP + L-glutamate + AMP + diphosphate + 2 H(+). Its pathway is purine metabolism; GMP biosynthesis; GMP from XMP (L-Gln route): step 1/1. In terms of biological role, catalyzes the synthesis of GMP from XMP. In Streptococcus pyogenes serotype M6 (strain ATCC BAA-946 / MGAS10394), this protein is GMP synthase [glutamine-hydrolyzing].